We begin with the raw amino-acid sequence, 548 residues long: Luciferin 4-monooxygenase (548 aa).

Positions Ala546–Met548 match the Microbody targeting signal motif.

The protein belongs to the ATP-dependent AMP-binding enzyme family. In terms of assembly, homodimer. Mg(2+) is required as a cofactor.

The protein resides in the peroxisome. It catalyses the reaction firefly D-luciferin + ATP + O2 = firefly oxyluciferin + hnu + AMP + CO2 + diphosphate. With respect to regulation, inhibited by ATP analogs and sodium deoxycholate. Activated by choline-containing phospholipids. In terms of biological role, produces green light with a wavelength of 570 nm. The chain is Luciferin 4-monooxygenase from Luciola mingrelica (Southern Russian firefly).